Consider the following 790-residue polypeptide: Sodium- and chloride-dependent glycine transporter 2 (790 aa).

The segment at 1–39 (MDYVNVVDGSKKTMNSPEGAAPGLIGATGITNPTPDNDL) is disordered. The Cytoplasmic portion of the chain corresponds to 1–192 (MDYVNVVDGS…ARGNWSNKLD (192 aa)). 3 helical membrane-spanning segments follow: residues 193 to 213 (FILS…FPYL), 220 to 240 (GAFL…IFYL), and 264 to 284 (GCGI…NIIM). The Na(+) site is built by G199, A201, V202, and N206. Over 285 to 387 (CYTIFYLFAS…GIEYPGEIRW (103 aa)) the chain is Extracellular. A disulfide bridge connects residues C304 and C313. Residues N336, N346, N351, and N357 are each glycosylated (N-linked (GlcNAc...) asparagine). A run of 3 helical transmembrane segments spans residues 388–408 (PLVF…AKGI), 427–447 (VILL…WWFI), and 463–483 (AATQ…TLSS). Residues S470 and N502 each coordinate Na(+). The next 6 membrane-spanning stretches (helical) occupy residues 504 to 524 (ATSI…AHIL), 556 to 576 (WAII…FATI), 597 to 617 (LFTL…ITQG), 631 to 651 (SYSL…IYGL), 672 to 692 (ICWA…SFYQ), and 708 to 728 (MVMG…MFVI). Na(+) contacts are provided by L567 and D570. Over 729 to 790 (KMFLAPGTFI…PKDFELGTQC (62 aa)) the chain is Cytoplasmic.

Belongs to the sodium:neurotransmitter symporter (SNF) (TC 2.A.22) family. SLC6A5 subfamily. As to expression, first expressed in late neurula stages in the anterior spinal cord, where expression intensifies through the tailbud stages, and by hatching, expression is seen in the hindbrain. During late hatching stages, expression extends along most of the length of the spinal cord, mildly intensifies in the hindbrain, and appears in localized regions of the lateral forebrain and medial midbrain. By the swimming tadpole stage, weak expression appears in the anterior hindbrain, with stronger expression in the posterior, postmitotic neurons.

The protein resides in the cell membrane. The catalysed reaction is glycine(out) + chloride(out) + 3 Na(+)(out) = glycine(in) + chloride(in) + 3 Na(+)(in). In terms of biological role, sodium- and chloride-dependent glycine transporter. Terminates the action of glycine by its high affinity sodium-dependent reuptake into presynaptic terminals. May be responsible for the termination of neurotransmission at strychnine-sensitive glycinergic synapses. The chain is Sodium- and chloride-dependent glycine transporter 2 from Xenopus laevis (African clawed frog).